A 355-amino-acid polypeptide reads, in one-letter code: Arginine kinase (355 aa).

The Phosphagen kinase N-terminal domain maps to 8-90; the sequence is KLQAGFKKLE…FDPIIEDYHV (83 aa). 63–67 lines the L-arginine pocket; the sequence is GVGIY. Residues 118 to 355 form the Phosphagen kinase C-terminal domain; it reads YVISTRVRCG…LQLIKMEKEM (238 aa). ATP contacts are provided by residues 121–125 and H184; that span reads STRVR. Residue E224 participates in L-arginine binding. Residue R228 participates in ATP binding. C270 is an L-arginine binding site. ATP contacts are provided by residues 279–283 and 308–313; these read RASVH and RGTRGE. An L-arginine-binding site is contributed by E313.

It belongs to the ATP:guanido phosphotransferase family. Monomer.

The catalysed reaction is L-arginine + ATP = N(omega)-phospho-L-arginine + ADP + H(+). The protein is Arginine kinase of Penaeus japonicus (Kuruma prawn).